A 636-amino-acid polypeptide reads, in one-letter code: uncharacterized protein (636 aa).

The next 3 helical transmembrane spans lie at 12–32 (AVIY…FGSI), 34–54 (IMHL…TTTG), and 75–95 (IGAG…FMSF). Residues 112 to 231 (KNHFILCGFG…KKAGANRIIS (120 aa)) enclose the RCK N-terminal domain.

The protein resides in the cell membrane. This is an uncharacterized protein from Methanothermus fervidus (strain ATCC 43054 / DSM 2088 / JCM 10308 / V24 S).